Reading from the N-terminus, the 344-residue chain is Arginine N-succinyltransferase (344 aa).

Succinyl-CoA is bound at residue leucine 125. Histidine 229 acts as the Proton donor in catalysis.

Belongs to the arginine N-succinyltransferase family.

The catalysed reaction is succinyl-CoA + L-arginine = N(2)-succinyl-L-arginine + CoA + H(+). The protein operates within amino-acid degradation; L-arginine degradation via AST pathway; L-glutamate and succinate from L-arginine: step 1/5. Functionally, catalyzes the transfer of succinyl-CoA to arginine to produce N(2)-succinylarginine. The sequence is that of Arginine N-succinyltransferase from Escherichia coli O127:H6 (strain E2348/69 / EPEC).